Reading from the N-terminus, the 405-residue chain is Caspase-1 (405 aa).

In terms of domain architecture, CARD spans 1–91 (MADKVLKEKR…HLAETLRLSS (91 aa)). The propeptide occupies 1–119 (MADKVLKEKR…SSPALQAMPD (119 aa)). Active-site residues include His-238 and Cys-286. Residues 299 to 317 (STGTSGNSSSLAPDDFEDD) constitute a propeptide that is removed on maturation. Phosphoserine is present on Ser-303.

This sequence belongs to the peptidase C14A family. In terms of assembly, heterotetramer that consists of two anti-parallel arranged heterodimers, each one formed by a 20 kDa (Caspase-1 subunit p20) and a 10 kDa (Caspase-1 subunit p10) subunit. May be a component of the inflammasome, a protein complex which also includes PYCARD, CARD8 and NLRP2 and whose function would be the activation of pro-inflammatory caspases. Component of the AIM2 PANoptosome complex, a multiprotein complex that drives inflammatory cell death (PANoptosis). Both the p10 and p20 subunits interact with MEFV. Interacts with CARD17P/INCA and CARD18. Interacts with SERPINB1; this interaction regulates CASP1 activity. Heterotetramer that consists of two anti-parallel arranged heterodimers, each one formed by a 20 kDa (Caspase-1 subunit p20) and a 10 kDa (Caspase-1 subunit p10) subunit. Post-translationally, the two subunits are derived from the precursor sequence by an autocatalytic mechanism. Ubiquitinated via 'Lys-11'-linked polyubiquitination. Deubiquitinated by USP8.

It localises to the cytoplasm. The protein resides in the cell membrane. The catalysed reaction is Strict requirement for an Asp residue at position P1 and has a preferred cleavage sequence of Tyr-Val-Ala-Asp-|-.. Its function is as follows. Thiol protease involved in a variety of inflammatory processes by proteolytically cleaving other proteins, such as the precursors of the inflammatory cytokines interleukin-1 beta (IL1B) and interleukin 18 (IL18) as well as the pyroptosis inducer Gasdermin-D (GSDMD), into active mature peptides. Plays a key role in cell immunity as an inflammatory response initiator: once activated through formation of an inflammasome complex, it initiates a pro-inflammatory response through the cleavage of the two inflammatory cytokines IL1B and IL18, releasing the mature cytokines which are involved in a variety of inflammatory processes. Cleaves a tetrapeptide after an Asp residue at position P1. Also initiates pyroptosis, a programmed lytic cell death pathway, through cleavage of GSDMD. In contrast to cleavage of interleukin IL1B, recognition and cleavage of GSDMD is not strictly dependent on the consensus cleavage site but depends on an exosite interface on CASP1 that recognizes and binds the Gasdermin-D, C-terminal (GSDMD-CT) part. Cleaves and activates CASP7 in response to bacterial infection, promoting plasma membrane repair. Upon inflammasome activation, during DNA virus infection but not RNA virus challenge, controls antiviral immunity through the cleavage of CGAS, rendering it inactive. In apoptotic cells, cleaves SPHK2 which is released from cells and remains enzymatically active extracellularly. The sequence is that of Caspase-1 (CASP1) from Equus caballus (Horse).